A 364-amino-acid polypeptide reads, in one-letter code: tRNA/tmRNA (uracil-C(5))-methyltransferase (364 aa).

5 residues coordinate S-adenosyl-L-methionine: Q186, Y214, N219, E235, and D295. Catalysis depends on C320, which acts as the Nucleophile. Residue E354 is the Proton acceptor of the active site.

Belongs to the class I-like SAM-binding methyltransferase superfamily. RNA M5U methyltransferase family. TrmA subfamily.

The catalysed reaction is uridine(54) in tRNA + S-adenosyl-L-methionine = 5-methyluridine(54) in tRNA + S-adenosyl-L-homocysteine + H(+). It catalyses the reaction uridine(341) in tmRNA + S-adenosyl-L-methionine = 5-methyluridine(341) in tmRNA + S-adenosyl-L-homocysteine + H(+). In terms of biological role, dual-specificity methyltransferase that catalyzes the formation of 5-methyluridine at position 54 (m5U54) in all tRNAs, and that of position 341 (m5U341) in tmRNA (transfer-mRNA). The protein is tRNA/tmRNA (uracil-C(5))-methyltransferase of Azoarcus sp. (strain BH72).